The chain runs to 172 residues: Epididymal secretory protein 4 (172 aa).

The N-terminal stretch at 1–21 (MIAVLLLVFGMTPDYIFPVSA) is a signal peptide. C82 and C167 are joined by a disulfide.

This sequence belongs to the calycin superfamily. Lipocalin family. As to expression, secreted by the epididymal epithelial cells.

The protein localises to the secreted. The protein resides in the extracellular space. Its function is as follows. Could transport small hydrophobic molecules into the epididymal fluid during the sperm maturation. Binds to the head region of spermatozoa and plays a key role in sperm maturation. This Zootoca vivipara (Common lizard) protein is Epididymal secretory protein 4.